A 358-amino-acid chain; its full sequence is Phosphoserine aminotransferase (358 aa).

Arg-41 contributes to the L-glutamate binding site. Pyridoxal 5'-phosphate is bound by residues 75-76 (AS), Trp-100, Thr-148, Asp-167, and Gln-190. At Lys-191 the chain carries N6-(pyridoxal phosphate)lysine. Position 233-234 (233-234 (NT)) interacts with pyridoxal 5'-phosphate.

This sequence belongs to the class-V pyridoxal-phosphate-dependent aminotransferase family. SerC subfamily. As to quaternary structure, homodimer. Pyridoxal 5'-phosphate serves as cofactor.

Its subcellular location is the cytoplasm. It catalyses the reaction O-phospho-L-serine + 2-oxoglutarate = 3-phosphooxypyruvate + L-glutamate. The enzyme catalyses 4-(phosphooxy)-L-threonine + 2-oxoglutarate = (R)-3-hydroxy-2-oxo-4-phosphooxybutanoate + L-glutamate. It participates in amino-acid biosynthesis; L-serine biosynthesis; L-serine from 3-phospho-D-glycerate: step 2/3. The protein operates within cofactor biosynthesis; pyridoxine 5'-phosphate biosynthesis; pyridoxine 5'-phosphate from D-erythrose 4-phosphate: step 3/5. Catalyzes the reversible conversion of 3-phosphohydroxypyruvate to phosphoserine and of 3-hydroxy-2-oxo-4-phosphonooxybutanoate to phosphohydroxythreonine. The polypeptide is Phosphoserine aminotransferase (Campylobacter jejuni subsp. doylei (strain ATCC BAA-1458 / RM4099 / 269.97)).